A 420-amino-acid polypeptide reads, in one-letter code: Pyrophosphate--fructose 6-phosphate 1-phosphotransferase (420 aa).

Gly-13 lines the diphosphate pocket. Substrate is bound by residues 142–144 (TVD), 190–192 (MGR), Glu-247, and 297–300 (YLQR). Residue Asp-144 is the Proton acceptor of the active site.

It belongs to the phosphofructokinase type A (PFKA) family. PPi-dependent PFK group II subfamily. Clade 'B2' sub-subfamily. As to quaternary structure, homodimer. The cofactor is Mg(2+). Requires Co(2+) as cofactor. It depends on Mn(2+) as a cofactor.

The protein resides in the cytoplasm. The enzyme catalyses beta-D-fructose 6-phosphate + diphosphate = beta-D-fructose 1,6-bisphosphate + phosphate + H(+). It participates in carbohydrate degradation; glycolysis; D-glyceraldehyde 3-phosphate and glycerone phosphate from D-glucose: step 3/4. Its activity is regulated as follows. Non-allosteric. In terms of biological role, catalyzes the phosphorylation of D-fructose 6-phosphate, the first committing step of glycolysis. Uses inorganic phosphate (PPi) as phosphoryl donor instead of ATP like common ATP-dependent phosphofructokinases (ATP-PFKs), which renders the reaction reversible, and can thus function both in glycolysis and gluconeogenesis. Consistently, PPi-PFK can replace the enzymes of both the forward (ATP-PFK) and reverse (fructose-bisphosphatase (FBPase)) reactions. This chain is Pyrophosphate--fructose 6-phosphate 1-phosphotransferase, found in Methylococcus capsulatus (strain ATCC 33009 / NCIMB 11132 / Bath).